The chain runs to 793 residues: Tripartite terminase subunit 1 (793 aa).

The C3H1-type zinc finger occupies 206 to 234; that stretch reads CSVCFEELCVTANSGDSTHKRIVRKICDH. Residue 697-704 participates in ATP binding; that stretch reads FSSVFKCG.

It belongs to the herpesviridae TRM1 protein family. As to quaternary structure, associates with TRM2 and TRM3 to form the tripartite terminase complex. Interacts with portal protein.

It is found in the host nucleus. In terms of biological role, component of the molecular motor that translocates viral genomic DNA in empty capsid during DNA packaging. Forms a tripartite terminase complex together with TRM2 and TRM3 in the host cytoplasm. Once the complex reaches the host nucleus, it interacts with the capsid portal vertex. This portal forms a ring in which genomic DNA is translocated into the capsid. TRM1 carries an endonuclease activity that plays an important role for the cleavage of concatemeric viral DNA into unit length genomes. This Gallid herpesvirus 2 (strain Chicken/Md5/ATCC VR-987) (GaHV-2) protein is Tripartite terminase subunit 1.